The primary structure comprises 856 residues: Facilitated trehalose transporter Tret1 (856 aa).

Disordered regions lie at residues 1–27 (MSGR…GKLK) and 62–202 (DPFL…KATS). At 1 to 389 (MSGRDNRGAG…LEVYRPTTNP (389 aa)) the chain is on the cytoplasmic side. Residues 69 to 80 (VSPQRHPQTVRT) show a composition bias toward polar residues. The span at 133–142 (EIREHRDRQQ) shows a compositional bias: basic and acidic residues. A compositionally biased stretch (polar residues) spans 170 to 180 (GNSNTNNNKAA). S247, S248, S249, S319, and S321 each carry phosphoserine. The disordered stretch occupies residues 326 to 345 (LTSRQHFQQQRSISTDSRKS). The span at 329 to 340 (RQHFQQQRSIST) shows a compositional bias: polar residues. The chain crosses the membrane as a helical span at residues 390–410 (IFIWTQVLAALSVSLGSLVVG). Residues 411–439 (FVSAYTSPALVSMTDRNITSFEVTQDAGS) lie on the Extracellular side of the membrane. N-linked (GlcNAc...) asparagine glycosylation is present at N427. The helical transmembrane segment at 440 to 460 (WVGGIMPLAGLAGGIAGGPLI) threads the bilayer. Residues 461 to 472 (EYLGRRNTILAT) are Cytoplasmic-facing. The chain crosses the membrane as a helical span at residues 473–493 (AVPFIVSSLLIACAVNVAMVL). The Extracellular segment spans residues 494–496 (CGR). The chain crosses the membrane as a helical span at residues 497–517 (FLAGFCVGIASLSLPVYLGET). Residues 518-527 (VQPEVRGTLG) are Cytoplasmic-facing. The chain crosses the membrane as a helical span at residues 528 to 548 (LLPTAFGNIGILLCFVAGSFM). N549 carries N-linked (GlcNAc...) asparagine glycosylation. The Extracellular portion of the chain corresponds to 549-551 (NWS). The helical transmembrane segment at 552-572 (MLAFLGAALPVPFLILMFLIP) threads the bilayer. The Cytoplasmic portion of the chain corresponds to 573–635 (ETPRWFVSRG…ELLKRNNLKP (63 aa)). The chain crosses the membrane as a helical span at residues 636–656 (LSISLGLMFFQQLSGINAVIF). At 657–672 (YTVQIFKDAGSTIDGN) the chain is on the extracellular side. Residues 673–693 (ICTIIVGVVNFLATFIGIVLI) form a helical membrane-spanning segment. Residues 694–699 (DRAGRK) are Cytoplasmic-facing. Residues 700-720 (ILLYVSNIAMILTLFVLGGFF) traverse the membrane as a helical segment. Residues 721-739 (YCKAHGPDVSNLGWLPLTC) are Extracellular-facing. Residues 740–760 (FVIYILGFSLGFGPIPWLMMG) traverse the membrane as a helical segment. Residues 761–766 (EILPAK) lie on the Cytoplasmic side of the membrane. The helical transmembrane segment at 767 to 787 (IRGSAASVATAFNWSCTFVVT) threads the bilayer. At 788 to 800 (KTFQDLTVAMGAH) the chain is on the extracellular side. A helical membrane pass occupies residues 801–821 (GAFWLFGAICFVGLFFVIIYV). Residues 822–856 (PETQGKTLEDIERKMMGRVRRMSSVANIKPLSFNM) lie on the Cytoplasmic side of the membrane. Phosphoserine is present on residues S844 and S845.

This sequence belongs to the major facilitator superfamily. Sugar transporter (TC 2.A.1.1) family. Trehalose transporter subfamily.

Its subcellular location is the cell membrane. Its function is as follows. Low-capacity facilitative transporter for trehalose. Does not transport maltose, sucrose or lactose. Mediates the bidirectional transfer of trehalose. Responsible for the transport of trehalose synthesized in the fat body and the incorporation of trehalose into other tissues that require a carbon source, thereby regulating trehalose levels in the hemolymph. This is Facilitated trehalose transporter Tret1 from Drosophila erecta (Fruit fly).